A 416-amino-acid chain; its full sequence is Phosphoglycerate kinase (416 aa).

(2R)-3-phosphoglycerate contacts are provided by valine 23, aspartate 24, phenylalanine 25, asparagine 26, glutamine 38, arginine 39, serine 62, histidine 63, glycine 65, arginine 66, leucine 121, arginine 122, histidine 168, and arginine 169. Position 212 (glycine 212) interacts with ADP. Residue glycine 212 coordinates CDP. AMP is bound by residues alanine 213 and lysine 214. Alanine 213 lines the ATP pocket. Alanine 213 is a binding site for Mg(2+). Positions 216 and 217 each coordinate Mg(2+). Aspartate 217 contributes to the CDP binding site. Lysine 218 contacts AMP. ATP is bound at residue lysine 218. ADP is bound at residue glycine 236. Glycine 236 is a binding site for CDP. 2 residues coordinate AMP: glycine 237 and glycine 311. Residues glycine 237 and glycine 311 each contribute to the ATP site. Glycine 336 and phenylalanine 341 together coordinate CDP. Phenylalanine 341 contributes to the ADP binding site. Position 342 (glutamate 342) interacts with AMP. Residues glutamate 342, aspartate 373, and threonine 374 each coordinate ATP. Position 373 (aspartate 373) interacts with Mg(2+).

The protein belongs to the phosphoglycerate kinase family. Monomer. Mg(2+) is required as a cofactor.

It is found in the cytoplasm. It localises to the mitochondrion. The catalysed reaction is (2R)-3-phosphoglycerate + ATP = (2R)-3-phospho-glyceroyl phosphate + ADP. The protein operates within carbohydrate degradation; glycolysis; pyruvate from D-glyceraldehyde 3-phosphate: step 2/5. In terms of biological role, catalyzes one of the two ATP producing reactions in the glycolytic pathway via the reversible conversion of 1,3-diphosphoglycerate to 3-phosphoglycerate. Both L- and D- forms of purine and pyrimidine nucleotides can be used as substrates, but the activity is much lower on pyrimidines. Negatively regulates the biosynthesis of acetyl-CoA from pyruvate in the mitochondrion. The sequence is that of Phosphoglycerate kinase (PGK) from Kluyveromyces lactis (strain ATCC 8585 / CBS 2359 / DSM 70799 / NBRC 1267 / NRRL Y-1140 / WM37) (Yeast).